The chain runs to 55 residues: Large ribosomal subunit protein bL33 (55 aa).

Belongs to the bacterial ribosomal protein bL33 family.

The polypeptide is Large ribosomal subunit protein bL33 (Brucella abortus (strain S19)).